Consider the following 227-residue polypeptide: Glutathione S-transferase U27 (227 aa).

Residues 4 to 84 enclose the GST N-terminal domain; it reads EEVVVLNFWP…YIDEVWKDDK (81 aa). Residues 14–15, 41–42, 55–56, and 68–69 contribute to the glutathione site; these read SM, QK, KI, and ES. The region spanning 92-217 is the GST C-terminal domain; it reads DPYQKSQCRF…LKIFDRVTQI (126 aa).

Belongs to the GST superfamily. Tau family.

Its subcellular location is the cytoplasm. It localises to the cytosol. The catalysed reaction is RX + glutathione = an S-substituted glutathione + a halide anion + H(+). Its function is as follows. May be involved in the conjugation of reduced glutathione to a wide number of exogenous and endogenous hydrophobic electrophiles and have a detoxification role against certain herbicides. This Arabidopsis thaliana (Mouse-ear cress) protein is Glutathione S-transferase U27 (GSTU27).